Reading from the N-terminus, the 264-residue chain is Apolipoprotein A-I (264 aa).

The first 18 residues, 1 to 18 (MKAVVLAVAVLFLTGSQA), serve as a signal peptide directing secretion. 2 tandem repeats follow at residues 67-88 (LNLLANWNTLTSTFNNLREQLG) and 89-110 (SVTKEFWDNLGEDTVWLRQQMN). Positions 67–264 (LNLLANWNTL…DQASKQLSAQ (198 aa)) are 10 X approximate tandem repeats. Methionine 109 carries the methionine sulfoxide modification. The 3; half-length repeat unit spans residues 111–121 (KDLEEVKQKVQ). 5 consecutive repeat copies span residues 122-142 (SYLDNFQKKVNEEVERYRDKV), 144-165 (PLGKELHKDAQQKLKELQEKLA), 166-187 (PLGQDIRQRAREYVDALRTHLG), 188-208 (SYTQGMRQGLAKRLEALKESA), and 209-229 (PVSEYQVKASKHLKTFSEKAK). Methionine 193 carries the post-translational modification Methionine sulfoxide. A 9; half-length repeat occupies 230 to 240 (PALEDLRQGLM). At methionine 240 the chain carries Methionine sulfoxide. Repeat 10 spans residues 241–264 (PVMESLKASFLSSIDQASKQLSAQ).

It belongs to the apolipoprotein A1/A4/E family. In terms of assembly, homodimer. Interacts with APOA1BP and CLU. Component of a sperm activating protein complex (SPAP), consisting of APOA1, an immunoglobulin heavy chain, an immunoglobulin light chain and albumin. Interacts with NDRG1. Interacts with SCGB3A2. Interacts with NAXE and YJEFN3. In terms of processing, glycosylated. Palmitoylated. Post-translationally, phosphorylation sites are present in the extracellular medium. In terms of tissue distribution, major protein of plasma HDL, also found in chylomicrons.

It is found in the secreted. Functionally, participates in the reverse transport of cholesterol from tissues to the liver for excretion by promoting cholesterol efflux from tissues and by acting as a cofactor for the lecithin cholesterol acyltransferase (LCAT). As part of the SPAP complex, activates spermatozoa motility. This Heterocephalus glaber (Naked mole rat) protein is Apolipoprotein A-I (Apoa1).